A 316-amino-acid polypeptide reads, in one-letter code: 4-hydroxy-3-methylbut-2-enyl diphosphate reductase (316 aa).

Residue Cys-12 coordinates [4Fe-4S] cluster. The (2E)-4-hydroxy-3-methylbut-2-enyl diphosphate site is built by His-41 and His-74. Dimethylallyl diphosphate-binding residues include His-41 and His-74. Isopentenyl diphosphate-binding residues include His-41 and His-74. Position 96 (Cys-96) interacts with [4Fe-4S] cluster. His-124 provides a ligand contact to (2E)-4-hydroxy-3-methylbut-2-enyl diphosphate. His-124 serves as a coordination point for dimethylallyl diphosphate. Isopentenyl diphosphate is bound at residue His-124. Glu-126 (proton donor) is an active-site residue. A (2E)-4-hydroxy-3-methylbut-2-enyl diphosphate-binding site is contributed by Thr-167. Cys-197 contributes to the [4Fe-4S] cluster binding site. (2E)-4-hydroxy-3-methylbut-2-enyl diphosphate contacts are provided by Ser-225, Ser-226, Asn-227, and Ser-269. Residues Ser-225, Ser-226, Asn-227, and Ser-269 each contribute to the dimethylallyl diphosphate site. Isopentenyl diphosphate is bound by residues Ser-225, Ser-226, Asn-227, and Ser-269.

The protein belongs to the IspH family. As to quaternary structure, homodimer. [4Fe-4S] cluster serves as cofactor.

The enzyme catalyses isopentenyl diphosphate + 2 oxidized [2Fe-2S]-[ferredoxin] + H2O = (2E)-4-hydroxy-3-methylbut-2-enyl diphosphate + 2 reduced [2Fe-2S]-[ferredoxin] + 2 H(+). It carries out the reaction dimethylallyl diphosphate + 2 oxidized [2Fe-2S]-[ferredoxin] + H2O = (2E)-4-hydroxy-3-methylbut-2-enyl diphosphate + 2 reduced [2Fe-2S]-[ferredoxin] + 2 H(+). It participates in isoprenoid biosynthesis; dimethylallyl diphosphate biosynthesis; dimethylallyl diphosphate from (2E)-4-hydroxy-3-methylbutenyl diphosphate: step 1/1. Its pathway is isoprenoid biosynthesis; isopentenyl diphosphate biosynthesis via DXP pathway; isopentenyl diphosphate from 1-deoxy-D-xylulose 5-phosphate: step 6/6. Its function is as follows. Catalyzes the conversion of 1-hydroxy-2-methyl-2-(E)-butenyl 4-diphosphate (HMBPP) into a mixture of isopentenyl diphosphate (IPP) and dimethylallyl diphosphate (DMAPP). Acts in the terminal step of the DOXP/MEP pathway for isoprenoid precursor biosynthesis. This chain is 4-hydroxy-3-methylbut-2-enyl diphosphate reductase, found in Salmonella paratyphi C (strain RKS4594).